The sequence spans 141 residues: HTH-type transcriptional regulator LrpA (141 aa).

In terms of domain architecture, HTH asnC-type spans I2–S63. A DNA-binding region (H-T-H motif) is located at residues F21–K40.

As to quaternary structure, homooctamer; tetramer of dimers.

Functionally, DNA-binding protein that negatively regulates its own transcription. Interferes with RNA polymerase (RNAP) recruitment by inhibiting the association of RNAP with the TBP-TFB promoter complex. This Pyrococcus horikoshii (strain ATCC 700860 / DSM 12428 / JCM 9974 / NBRC 100139 / OT-3) protein is HTH-type transcriptional regulator LrpA (lrpA).